A 107-amino-acid polypeptide reads, in one-letter code: Putative double-stranded DNA mimic protein HI_1450 (107 aa).

The protein belongs to the putative dsDNA mimic protein family. In terms of assembly, monomer in solution. Interacts with the DNA-binding protein HU.

Its function is as follows. May act as a double-stranded DNA (dsDNA) mimic. Probably regulates the activity of the DNA-binding protein HU. This is Putative double-stranded DNA mimic protein HI_1450 from Haemophilus influenzae (strain ATCC 51907 / DSM 11121 / KW20 / Rd).